Here is an 877-residue protein sequence, read N- to C-terminus: Alanine--tRNA ligase (877 aa).

Residues His567, His571, Cys669, and His673 each coordinate Zn(2+).

It belongs to the class-II aminoacyl-tRNA synthetase family. Zn(2+) is required as a cofactor.

It is found in the cytoplasm. The enzyme catalyses tRNA(Ala) + L-alanine + ATP = L-alanyl-tRNA(Ala) + AMP + diphosphate. Functionally, catalyzes the attachment of alanine to tRNA(Ala) in a two-step reaction: alanine is first activated by ATP to form Ala-AMP and then transferred to the acceptor end of tRNA(Ala). Also edits incorrectly charged Ser-tRNA(Ala) and Gly-tRNA(Ala) via its editing domain. This Rickettsia bellii (strain RML369-C) protein is Alanine--tRNA ligase.